The chain runs to 300 residues: Glycine--tRNA ligase alpha subunit (300 aa).

The protein belongs to the class-II aminoacyl-tRNA synthetase family. Tetramer of two alpha and two beta subunits.

The protein resides in the cytoplasm. It carries out the reaction tRNA(Gly) + glycine + ATP = glycyl-tRNA(Gly) + AMP + diphosphate. In Prochlorococcus marinus (strain MIT 9313), this protein is Glycine--tRNA ligase alpha subunit.